A 121-amino-acid chain; its full sequence is Large ribosomal subunit protein uL22 (121 aa).

Belongs to the universal ribosomal protein uL22 family. Part of the 50S ribosomal subunit.

In terms of biological role, this protein binds specifically to 23S rRNA; its binding is stimulated by other ribosomal proteins, e.g. L4, L17, and L20. It is important during the early stages of 50S assembly. It makes multiple contacts with different domains of the 23S rRNA in the assembled 50S subunit and ribosome. The globular domain of the protein is located near the polypeptide exit tunnel on the outside of the subunit, while an extended beta-hairpin is found that lines the wall of the exit tunnel in the center of the 70S ribosome. This chain is Large ribosomal subunit protein uL22, found in Synechococcus sp. (strain CC9902).